A 711-amino-acid chain; its full sequence is Ribosomal RNA large subunit methyltransferase K/L (711 aa).

Residues 42–153 (DAQRAVLWSR…KGRATISVDL (112 aa)) enclose the THUMP domain.

Belongs to the methyltransferase superfamily. RlmKL family.

The protein localises to the cytoplasm. The enzyme catalyses guanosine(2445) in 23S rRNA + S-adenosyl-L-methionine = N(2)-methylguanosine(2445) in 23S rRNA + S-adenosyl-L-homocysteine + H(+). It carries out the reaction guanosine(2069) in 23S rRNA + S-adenosyl-L-methionine = N(2)-methylguanosine(2069) in 23S rRNA + S-adenosyl-L-homocysteine + H(+). Specifically methylates the guanine in position 2445 (m2G2445) and the guanine in position 2069 (m7G2069) of 23S rRNA. The polypeptide is Ribosomal RNA large subunit methyltransferase K/L (Xanthomonas campestris pv. campestris (strain B100)).